The following is a 948-amino-acid chain: UvrABC system protein A (948 aa).

An ATP-binding site is contributed by 33–40; that stretch reads GLSGSGKS. Residues 252-279 form a C4-type zinc finger; that stretch reads CPICGFSIGELEPRMFSFNSPFGACPTC. ABC transporter domains are found at residues 309–587 and 607–935; these read WIPT…KKSL and ASDR…KYLK. Position 639–646 (639–646) interacts with ATP; that stretch reads GVSGSGKS. A C4-type zinc finger spans residues 738–764; that stretch reads CEACKGDGIIKIEMHFLPDVYVPCEVC.

It belongs to the ABC transporter superfamily. UvrA family. As to quaternary structure, forms a heterotetramer with UvrB during the search for lesions.

The protein localises to the cytoplasm. Its function is as follows. The UvrABC repair system catalyzes the recognition and processing of DNA lesions. UvrA is an ATPase and a DNA-binding protein. A damage recognition complex composed of 2 UvrA and 2 UvrB subunits scans DNA for abnormalities. When the presence of a lesion has been verified by UvrB, the UvrA molecules dissociate. The polypeptide is UvrABC system protein A (Staphylococcus aureus (strain N315)).